Here is a 395-residue protein sequence, read N- to C-terminus: Lipoyl synthase, mitochondrial (395 aa).

The transit peptide at 1-24 (MVKLPSASRIRSLATVPSTATRAF) directs the protein to the mitochondrion. Cys107, Cys112, Cys118, Cys137, Cys141, Cys144, and Ser357 together coordinate [4Fe-4S] cluster. The Radical SAM core domain maps to 122 to 346 (GKGNATATIM…KNVAEGMGFL (225 aa)).

Belongs to the radical SAM superfamily. Lipoyl synthase family. [4Fe-4S] cluster is required as a cofactor.

The protein resides in the mitochondrion. The catalysed reaction is [[Fe-S] cluster scaffold protein carrying a second [4Fe-4S](2+) cluster] + N(6)-octanoyl-L-lysyl-[protein] + 2 oxidized [2Fe-2S]-[ferredoxin] + 2 S-adenosyl-L-methionine + 4 H(+) = [[Fe-S] cluster scaffold protein] + N(6)-[(R)-dihydrolipoyl]-L-lysyl-[protein] + 4 Fe(3+) + 2 hydrogen sulfide + 2 5'-deoxyadenosine + 2 L-methionine + 2 reduced [2Fe-2S]-[ferredoxin]. Its pathway is protein modification; protein lipoylation via endogenous pathway; protein N(6)-(lipoyl)lysine from octanoyl-[acyl-carrier-protein]: step 2/2. Its function is as follows. Catalyzes the radical-mediated insertion of two sulfur atoms into the C-6 and C-8 positions of the octanoyl moiety bound to the lipoyl domains of lipoate-dependent enzymes, thereby converting the octanoylated domains into lipoylated derivatives. In Cryptococcus neoformans var. neoformans serotype D (strain B-3501A) (Filobasidiella neoformans), this protein is Lipoyl synthase, mitochondrial.